Here is a 73-residue protein sequence, read N- to C-terminus: UPF0352 protein APL_0584 (73 aa).

Belongs to the UPF0352 family.

This chain is UPF0352 protein APL_0584, found in Actinobacillus pleuropneumoniae serotype 5b (strain L20).